Here is a 380-residue protein sequence, read N- to C-terminus: Flap endonuclease 1 (380 aa).

The tract at residues 1–104 is N-domain; that stretch reads MGIQGLAKLI…GELAKRAERR (104 aa). A Mg(2+)-binding site is contributed by aspartate 34. DNA is bound by residues arginine 47 and arginine 70. Positions 86, 158, 160, 179, and 181 each coordinate Mg(2+). Positions 122–253 are I-domain; sequence DVNKFQKRLV…KRAIELIRQY (132 aa). Glutamate 158 is a binding site for DNA. DNA contacts are provided by glycine 231 and aspartate 233. Aspartate 233 provides a ligand contact to Mg(2+). A disordered region spans residues 328–380; that stretch reads LKNARHTSTQGRLDSFFKVMSSPSVKRKEPPKGAKGSASKKAKMSGGKFKKPK. An interaction with PCNA region spans residues 336 to 344; sequence TQGRLDSFF. Basic residues predominate over residues 365 to 380; it reads ASKKAKMSGGKFKKPK.

The protein belongs to the XPG/RAD2 endonuclease family. FEN1 subfamily. In terms of assembly, interacts with PCNA. Three molecules of FEN1 bind to one PCNA trimer with each molecule binding to one PCNA monomer. PCNA stimulates the nuclease activity without altering cleavage specificity. Mg(2+) is required as a cofactor. Phosphorylated. Phosphorylation upon DNA damage induces relocalization to the nuclear plasma.

It is found in the nucleus. Its subcellular location is the nucleolus. The protein resides in the nucleoplasm. The protein localises to the mitochondrion. In terms of biological role, structure-specific nuclease with 5'-flap endonuclease and 5'-3' exonuclease activities involved in DNA replication and repair. During DNA replication, cleaves the 5'-overhanging flap structure that is generated by displacement synthesis when DNA polymerase encounters the 5'-end of a downstream Okazaki fragment. It enters the flap from the 5'-end and then tracks to cleave the flap base, leaving a nick for ligation. Also involved in the long patch base excision repair (LP-BER) pathway, by cleaving within the apurinic/apyrimidinic (AP) site-terminated flap. Acts as a genome stabilization factor that prevents flaps from equilibrating into structures that lead to duplications and deletions. Also possesses 5'-3' exonuclease activity on nicked or gapped double-stranded DNA, and exhibits RNase H activity. Also involved in replication and repair of rDNA and in repairing mitochondrial DNA. The sequence is that of Flap endonuclease 1 from Branchiostoma floridae (Florida lancelet).